Reading from the N-terminus, the 985-residue chain is Na(+)/H(+) antiporter (985 aa).

Topologically, residues M1 to A12 are cytoplasmic. Residues H13–V33 form a helical membrane-spanning segment. The Extracellular segment spans residues K34–K36. The helical transmembrane segment at L37–L57 threads the bilayer. The Cytoplasmic segment spans residues N58–S70. A helical transmembrane segment spans residues I71–L91. Topologically, residues P92 to M105 are extracellular. The chain crosses the membrane as a helical span at residues L106–I126. Over P127–G128 the chain is Cytoplasmic. Residues L129–A149 traverse the membrane as a helical segment. The Extracellular segment spans residues Q150–N176. Residues D177–G197 form a helical membrane-spanning segment. Residues R198–D203 are Cytoplasmic-facing. Residues W204–G224 form a helical membrane-spanning segment. The Extracellular segment spans residues Y225–S244. The chain crosses the membrane as a helical span at residues F245–V265. The Cytoplasmic segment spans residues D266–S294. The chain crosses the membrane as a helical span at residues T295–W315. Over S316–N319 the chain is Extracellular. Residues N320–L340 traverse the membrane as a helical segment. Residues R341–E361 are Cytoplasmic-facing. A helical transmembrane segment spans residues A362–A382. Over R383–Q410 the chain is Extracellular. Residues L411–G431 traverse the membrane as a helical segment. Residues S432–K985 lie on the Cytoplasmic side of the membrane. 2 disordered regions span residues M489–T701 and D726–L760. The segment covering N517–T526 has biased composition (polar residues). Residues P538–N558 show a composition bias toward basic residues. Composition is skewed to basic and acidic residues over residues K559 to M572 and D580 to R593. A Phosphoserine modification is found at S568. A compositionally biased stretch (low complexity) spans S637–S646. Over residues E661–N675 the composition is skewed to acidic residues. A compositionally biased stretch (basic and acidic residues) spans E676–K698. The segment covering S743–S756 has biased composition (low complexity). T765 carries the post-translational modification Phosphothreonine. Residues S768 and S774 each carry the phosphoserine modification. The segment at I812–K985 is disordered. Composition is skewed to basic and acidic residues over residues H815 to N828 and D854 to S863. Residues L887 to T920 are compositionally biased toward acidic residues. Positions S970–K979 are enriched in low complexity.

This sequence belongs to the fungal Na(+)/H(+) exchanger family.

The protein resides in the cell membrane. Functionally, sodium export from cell, takes up external protons in exchange for internal sodium ions. Also capable of exporting potassium ions. The protein is Na(+)/H(+) antiporter (NHA1) of Saccharomyces cerevisiae (strain ATCC 204508 / S288c) (Baker's yeast).